A 499-amino-acid polypeptide reads, in one-letter code: UTP--glucose-1-phosphate uridylyltransferase (499 aa).

S2 is modified (N-acetylserine). S17 carries the phosphoserine modification. A Phosphothreonine modification is found at T19. 2 positions are modified to phosphoserine: S21 and S79. UTP is bound by residues 109-112 (LNGG), K123, Q186, and G215. Substrate is bound at residue 111–112 (GG). Residue K123 coordinates Mg(2+). Substrate contacts are provided by residues H216 and 244–246 (NGD). D246 lines the UTP pocket. D246 lines the Mg(2+) pocket. R369 carries the omega-N-methylarginine modification. K388 is a binding site for UTP. K388 is an active-site residue. Residues 448–499 (HLTITGNVFLGKDVTLRGTVIIVCSDGHKIDIPNGSILENVVVTGNLQILEH) form an oligomerization region.

It belongs to the UDPGP type 1 family. As to quaternary structure, homooctamer.

It carries out the reaction alpha-D-glucose 1-phosphate + UTP + H(+) = UDP-alpha-D-glucose + diphosphate. In terms of biological role, plays a central role as a glucosyl donor in cellular metabolic pathways. This is UTP--glucose-1-phosphate uridylyltransferase from Saccharomyces cerevisiae (strain ATCC 204508 / S288c) (Baker's yeast).